A 314-amino-acid chain; its full sequence is Protoheme IX farnesyltransferase (314 aa).

8 helical membrane passes run 30 to 50, 51 to 71, 122 to 142, 151 to 171, 178 to 198, 224 to 244, 247 to 267, and 285 to 305; these read VMSL…VSVH, PVIG…SGAL, FLAA…YSMW, IVIG…IATG, WLMF…LALF, IIAY…SAIG, VYLA…IDIW, and FFRL…LESA.

Belongs to the UbiA prenyltransferase family. Protoheme IX farnesyltransferase subfamily. As to quaternary structure, interacts with CtaA.

It localises to the cell inner membrane. The enzyme catalyses heme b + (2E,6E)-farnesyl diphosphate + H2O = Fe(II)-heme o + diphosphate. The protein operates within porphyrin-containing compound metabolism; heme O biosynthesis; heme O from protoheme: step 1/1. Converts heme B (protoheme IX) to heme O by substitution of the vinyl group on carbon 2 of heme B porphyrin ring with a hydroxyethyl farnesyl side group. The protein is Protoheme IX farnesyltransferase of Roseobacter denitrificans (strain ATCC 33942 / OCh 114) (Erythrobacter sp. (strain OCh 114)).